The sequence spans 181 residues: ATP-dependent protease subunit HslV (181 aa).

T5 is a catalytic residue. S162, C165, and T168 together coordinate Na(+).

The protein belongs to the peptidase T1B family. HslV subfamily. A double ring-shaped homohexamer of HslV is capped on each side by a ring-shaped HslU homohexamer. The assembly of the HslU/HslV complex is dependent on binding of ATP.

It localises to the cytoplasm. It carries out the reaction ATP-dependent cleavage of peptide bonds with broad specificity.. Its activity is regulated as follows. Allosterically activated by HslU binding. Its function is as follows. Protease subunit of a proteasome-like degradation complex believed to be a general protein degrading machinery. This chain is ATP-dependent protease subunit HslV, found in Campylobacter hominis (strain ATCC BAA-381 / DSM 21671 / CCUG 45161 / LMG 19568 / NCTC 13146 / CH001A).